Here is a 372-residue protein sequence, read N- to C-terminus: GDP-mannose transporter GONST3 (372 aa).

The next 10 membrane-spanning stretches (helical) occupy residues 33 to 53 (ASVYGVAAGYCLSASLLSIIN), 60 to 80 (FPYPGALTAMQYFTSAAGVLL), 92 to 112 (LNLLTMWRFLPAAMIFYLSLF), 125 to 145 (TFIVFRSAVPIFVAIGETLFL), 155 to 175 (WGSLATIFGGSLLYVFTDYQF), 177 to 197 (IAAYSWALAYLVSMTIDFVYI), 209 to 229 (WGLVLYNNLEALLLFPLELLI), 251 to 271 (VVLPVGLSCLFGLAISFFGFS), 280 to 300 (GFTVLGIVNKLLTVVINLMVW), and 303 to 323 (HSTFVGTLGLLVCMFGGVMYQ). Positions 331-372 (NATQEAKPQEQDEEQEKLLEMQENKESNSVDIKETLKSEEKL) are disordered. Positions 346–372 (EKLLEMQENKESNSVDIKETLKSEEKL) are enriched in basic and acidic residues.

It belongs to the nucleotide-sugar transporter family. GDP-Mannose:GMP antiporter (GMA) (TC 2.A.7.13) subfamily. Expressed in rosette leaves, stems, flowers and siliques.

It localises to the golgi apparatus membrane. Functionally, GDP-mannose transporter that may be involved in the import of GDP-mannose from the cytoplasm into the Golgi lumen. This chain is GDP-mannose transporter GONST3, found in Arabidopsis thaliana (Mouse-ear cress).